The chain runs to 793 residues: Tripartite terminase subunit 1 (793 aa).

The segment at 206–234 adopts a C3H1-type zinc-finger fold; the sequence is CSVCFEELCVTANSGDSTHKRIVRKICDH. Residue 697–704 coordinates ATP; it reads FSSVFKCG.

Belongs to the herpesviridae TRM1 protein family. As to quaternary structure, associates with TRM2 and TRM3 to form the tripartite terminase complex. Interacts with portal protein.

Its subcellular location is the host nucleus. Component of the molecular motor that translocates viral genomic DNA in empty capsid during DNA packaging. Forms a tripartite terminase complex together with TRM2 and TRM3 in the host cytoplasm. Once the complex reaches the host nucleus, it interacts with the capsid portal vertex. This portal forms a ring in which genomic DNA is translocated into the capsid. TRM1 carries an endonuclease activity that plays an important role for the cleavage of concatemeric viral DNA into unit length genomes. The sequence is that of Tripartite terminase subunit 1 from Gallid herpesvirus 2 (strain Chicken/Md5/ATCC VR-987) (GaHV-2).